The following is a 376-amino-acid chain: TraB domain-containing protein (376 aa).

The residue at position 1 (M1) is an N-acetylmethionine. Residue T64 is modified to Phosphothreonine.

This Mus musculus (Mouse) protein is TraB domain-containing protein (Trabd).